Here is a 116-residue protein sequence, read N- to C-terminus: Iron-sulfur cluster insertion protein ErpA (116 aa).

3 residues coordinate iron-sulfur cluster: Cys44, Cys108, and Cys110.

Belongs to the HesB/IscA family. Homodimer. It depends on iron-sulfur cluster as a cofactor.

In terms of biological role, required for insertion of 4Fe-4S clusters for at least IspG. The protein is Iron-sulfur cluster insertion protein ErpA of Shewanella baltica (strain OS223).